The chain runs to 613 residues: Kelch-like protein 36 (613 aa).

Residues 45–112 (CDVVLVVEEQ…LYSSELELDG (68 aa)) enclose the BTB domain. The BACK domain occupies 147 to 249 (YLYLQELASI…PEDILLQRVK (103 aa)). 6 Kelch repeats span residues 294-343 (CLLF…VLGG), 344-395 (FIFI…SIED), 396-442 (MLVA…IYKD), 444-491 (VYIS…SLGD), 492-544 (SIYS…VWQG), and 545-593 (RIYI…VCAL).

In terms of assembly, interacts with CUL3.

It functions in the pathway protein modification; protein ubiquitination. Functionally, probable substrate-specific adapter of an E3 ubiquitin-protein ligase complex which mediates the ubiquitination and subsequent proteasomal degradation of target proteins. In Mus musculus (Mouse), this protein is Kelch-like protein 36 (Klhl36).